Reading from the N-terminus, the 673-residue chain is DNA ligase (673 aa).

Residues 36–40 (DSEYD), 85–86 (SL), and glutamate 118 contribute to the NAD(+) site. The N6-AMP-lysine intermediate role is filled by lysine 120. 4 residues coordinate NAD(+): arginine 141, glutamate 178, lysine 295, and lysine 319. Positions 413, 416, 431, and 437 each coordinate Zn(2+). Residues 596–673 (VRDNPLKGKT…SENEFLALLA (78 aa)) form the BRCT domain.

The protein belongs to the NAD-dependent DNA ligase family. LigA subfamily. It depends on Mg(2+) as a cofactor. Requires Mn(2+) as cofactor.

It catalyses the reaction NAD(+) + (deoxyribonucleotide)n-3'-hydroxyl + 5'-phospho-(deoxyribonucleotide)m = (deoxyribonucleotide)n+m + AMP + beta-nicotinamide D-nucleotide.. DNA ligase that catalyzes the formation of phosphodiester linkages between 5'-phosphoryl and 3'-hydroxyl groups in double-stranded DNA using NAD as a coenzyme and as the energy source for the reaction. It is essential for DNA replication and repair of damaged DNA. The sequence is that of DNA ligase from Histophilus somni (strain 129Pt) (Haemophilus somnus).